A 747-amino-acid chain; its full sequence is Myotubularin-related protein 12 (747 aa).

Residues 205–643 (FDTPKDWCWE…PEIKVWAQRY (439 aa)) form the Myotubularin phosphatase domain. An interaction with MTM1 region spans residues 449-558 (VPIFLLFLDC…RGQQKGSRFK (110 aa)). The interval 548–575 (DRGQQKGSRFKHQRQLSLPLTQSKSSPK) is disordered. The segment covering 562 to 572 (QLSLPLTQSKS) has biased composition (polar residues). Serine 564 and serine 601 each carry phosphoserine.

Belongs to the protein-tyrosine phosphatase family. Non-receptor class myotubularin subfamily. Heterodimer with lipid phosphatase MTM1. Heterodimer with lipid phosphatase MTMR2. In terms of tissue distribution, expressed in skeletal muscles (at protein level).

The protein resides in the cytoplasm. Its subcellular location is the sarcoplasmic reticulum. It is found in the myofibril. The protein localises to the sarcomere. Its function is as follows. Acts as an adapter for the myotubularin-related phosphatases. Regulates phosphatase MTM1 protein stability and possibly its intracellular location. By stabilizing MTM1 protein levels, required for skeletal muscle maintenance but not for myogenesis. The chain is Myotubularin-related protein 12 (Mtmr12) from Mus musculus (Mouse).